The following is a 151-amino-acid chain: Deoxyuridine 5'-triphosphate nucleotidohydrolase (151 aa).

Substrate contacts are provided by residues 70-72 (RSG), Asn83, 87-89 (LID), and Met97.

It belongs to the dUTPase family. Mg(2+) serves as cofactor.

It carries out the reaction dUTP + H2O = dUMP + diphosphate + H(+). The protein operates within pyrimidine metabolism; dUMP biosynthesis; dUMP from dCTP (dUTP route): step 2/2. Its function is as follows. This enzyme is involved in nucleotide metabolism: it produces dUMP, the immediate precursor of thymidine nucleotides and it decreases the intracellular concentration of dUTP so that uracil cannot be incorporated into DNA. The chain is Deoxyuridine 5'-triphosphate nucleotidohydrolase from Pseudomonas putida (strain ATCC 47054 / DSM 6125 / CFBP 8728 / NCIMB 11950 / KT2440).